Consider the following 107-residue polypeptide: Phosphoribosyl-ATP pyrophosphatase (107 aa).

Belongs to the PRA-PH family.

Its subcellular location is the cytoplasm. The enzyme catalyses 1-(5-phospho-beta-D-ribosyl)-ATP + H2O = 1-(5-phospho-beta-D-ribosyl)-5'-AMP + diphosphate + H(+). Its pathway is amino-acid biosynthesis; L-histidine biosynthesis; L-histidine from 5-phospho-alpha-D-ribose 1-diphosphate: step 2/9. The polypeptide is Phosphoribosyl-ATP pyrophosphatase (Bacillus cereus (strain G9842)).